We begin with the raw amino-acid sequence, 900 residues long: Phospholipase DDHD1 (900 aa).

3 disordered regions span residues 1–28, 100–152, and 202–233; these read MNYP…ELGS, LRYY…GGPA, and GARP…DEDR. Phosphoserine is present on residues serine 8 and serine 11. Positions 130-140 are enriched in gly residues; the sequence is SGGGGATGGSP. Serine 537 is an active-site residue. The DDHD domain maps to 611–886; the sequence is LKFKVENFFC…ALFLLTFMYK (276 aa). Disordered regions lie at residues 706-725 and 768-801; these read AKEP…PSPV and SSTT…TQTL. Residues 710–725 are compositionally biased toward polar residues; it reads TSVSENEGISTIPSPV. Serine 723 bears the Phosphoserine mark. Positions 776–787 are enriched in basic and acidic residues; that stretch reads TSKDSMEDEKKP. A compositionally biased stretch (polar residues) spans 791–801; that stretch reads PSATTVGTQTL.

The protein belongs to the PA-PLA1 family. In terms of assembly, forms homooligomers and, to a much smaller extent, heterooligomers with DDHD2. In terms of tissue distribution, highly expressed in testis. Also expressed in brain, spleen and lung. Only expressed in cerebellum in fetal brain.

Its subcellular location is the cytoplasm. It carries out the reaction a 1,2-diacyl-sn-glycero-3-phosphate + H2O = a 2-acyl-sn-glycerol 3-phosphate + a fatty acid + H(+). The catalysed reaction is a 1,2-diacyl-sn-glycero-3-phospho-(1D-myo-inositol) + H2O = a 2-acyl-sn-glycero-3-phospho-D-myo-inositol + a fatty acid + H(+). The enzyme catalyses 1-octadecanoyl-2-(5Z,8Z,11Z,14Z-eicosatetraenoyl)-sn-glycero-3-phospho-(1D-myo-inositol) + H2O = 2-(5Z,8Z,11Z,14Z-eicosatetraenoyl)-sn-glycero-3-phospho-(1D-myo-inositol) + octadecanoate + H(+). It catalyses the reaction a 1-acyl-2-(5Z,8Z,11Z,14Z-eicosatetraenoyl)-sn-glycero-3-phospho-(1D-myo-inositol) + H2O = 2-(5Z,8Z,11Z,14Z-eicosatetraenoyl)-sn-glycero-3-phospho-(1D-myo-inositol) + a fatty acid + H(+). It carries out the reaction 1,2-dihexadecanoyl-sn-glycero-3-phospho-(1D-myo-inositol) + H2O = 2-hexadecanoyl-sn-glycero-3-phospho-(1D-myo-inositol) + hexadecanoate + H(+). The catalysed reaction is a 1-acyl-2-(5Z,8Z,11Z,14Z)-eicosatetraenoyl-sn-glycero-3-phosphate + H2O = 2-(5Z,8Z,11Z,14Z-eicosatetraenoyl)-sn-glycero-3-phosphate + a fatty acid + H(+). The enzyme catalyses 1,2-di-(9Z-octadecenoyl)-sn-glycero-3-phosphate + H2O = 2-(9Z-octadecenoyl)-sn-glycero-3-phosphate + (9Z)-octadecenoate + H(+). It catalyses the reaction 1-hexadecanoyl-2-(9Z-octadecenoyl)-sn-glycero-3-phosphate + H2O = 2-(9Z-octadecenoyl)-sn-glycero-3-phosphate + hexadecanoate + H(+). It carries out the reaction 1-hexadecanoyl-2-(9Z-octadecenoyl)-sn-glycero-3-phospho-L-serine + H2O = 2-(9Z-octadecenoyl)-sn-glycero-3-phospho-L-serine + hexadecanoate + H(+). The catalysed reaction is 1,2-di-(5Z,8Z,11Z,14Z)-eicosatetraenoyl-sn-glycero-3-phosphate + H2O = 2-(5Z,8Z,11Z,14Z-eicosatetraenoyl)-sn-glycero-3-phosphate + (5Z,8Z,11Z,14Z)-eicosatetraenoate + H(+). The enzyme catalyses 1-octadecanoyl-2-(5Z,8Z,11Z,14Z-eicosatetraenoyl)-sn-glycero-3-phosphate + H2O = 2-(5Z,8Z,11Z,14Z-eicosatetraenoyl)-sn-glycero-3-phosphate + octadecanoate + H(+). It catalyses the reaction a 1,2-diacyl-sn-glycero-3-phosphocholine + H2O = a 2-acyl-sn-glycero-3-phosphocholine + a fatty acid + H(+). It carries out the reaction a 1,2-diacyl-sn-glycero-3-phosphoethanolamine + H2O = a 2-acyl-sn-glycero-3-phosphoethanolamine + a fatty acid + H(+). The catalysed reaction is a 1,2-diacyl-sn-glycero-3-phospho-L-serine + H2O = a 2-acyl-sn-glycero-3-phospho-L-serine + a fatty acid + H(+). The enzyme catalyses a 1,2-diacyl-sn-glycero-3-phospho-(1'-sn-glycerol) + H2O = 2-acyl-sn-glycero-3-phospho-(1'-sn-glycerol) + a fatty acid + H(+). It catalyses the reaction 1-hexadecanoyl-2-(9Z-octadecenoyl)-sn-glycero-3-phospho-(1'-sn-glycerol) + H2O = 2-(9Z-octadecenoyl)-sn-glycero-3-phospho-(1'-sn-glycerol) + hexadecanoate + H(+). It carries out the reaction 1-acyl-2-(5Z,8Z,11Z,14Z-eicosatetraenoyl)-sn-glycero-3-phosphocholine + H2O = 2-(5Z,8Z,11Z,14Z)-eicosatetraenoyl-sn-glycero-3-phosphocholine + a fatty acid + H(+). The catalysed reaction is 1-acyl-2-(5Z,8Z,11Z,14Z)-eicosatetraenoyl-sn-glycero-3-phosphoethanolamine + H2O = 2-(5Z,8Z,11Z,14Z)-eicosatetraenoyl-sn-glycero-3-phosphoethanolamine + a fatty acid + H(+). The enzyme catalyses 1-(9Z-octadecenoyl)-2-(7Z,10Z,13Z,16Z,19Z-docosapentaenoyl)-sn-glycero-3-phospho-1D-myo-inositol + H2O = 2-(7Z,10Z,13Z,16Z,19Z-docosapentaenoyl)-sn-glycero-3-phospho-1D-myo-inositol + (9Z)-octadecenoate + H(+). It catalyses the reaction 1-(9Z-octadecenoyl)-2-(5Z,8Z,11Z,14Z-eicosatetraenoyl)-sn-glycero-3-phospho-1D-myo-inositol + H2O = 2-(5Z,8Z,11Z,14Z-eicosatetraenoyl)-sn-glycero-3-phospho-(1D-myo-inositol) + (9Z)-octadecenoate + H(+). It carries out the reaction 1,2-di-(9Z-octadecenoyl)-sn-glycero-3-phospho-1D-myo-inositol + H2O = 2-(9Z-octadecenoyl)-sn-glycero-3-phospho-1D-myo-inositol + (9Z)-octadecenoate + H(+). The catalysed reaction is 1-(9Z-octadecenoyl)-2-(8Z,11Z,14Z-eicosatrienoyl)-sn-glycero-3-phospho-1D-myo-inositol + H2O = 2-(8Z,11Z,14Z-eicosatrienoyl)-sn-glycero-3-phospho-1D-myo-inositol + (9Z)-octadecenoate + H(+). The enzyme catalyses 1,2-di-(9Z-octadecenoyl)-sn-glycero-3-phosphocholine + H2O = (9Z-octadecenoyl)-sn-glycero-3-phosphocholine + (9Z)-octadecenoate + H(+). Its pathway is phospholipid metabolism; phosphatidylinositol metabolism. With respect to regulation, phosphatidate (1,2-diacyl-sn-glycero-3-phosphate, PA) can positively regulate phospholipase A1 activity. In terms of biological role, phospholipase A1 (PLA1) that hydrolyzes ester bonds at the sn-1 position of glycerophospholipids producing a free fatty acid and a lysophospholipid. Prefers phosphatidate (1,2-diacyl-sn-glycero-3-phosphate, PA) as substrate in vitro, but can efficiently hydrolyze phosphatidylinositol (1,2-diacyl-sn-glycero-3-phospho-(1D-myo-inositol), PI), as well as a range of other glycerophospholipid substrates such as phosphatidylcholine (1,2-diacyl-sn-glycero-3-phosphocholine, PC), phosphatidylethanolamine (1,2-diacyl-sn-glycero-3-phosphoethanolamine, PE), phosphatidylserine (1,2-diacyl-sn-glycero-3-phospho-L-serine, PS) and phosphatidylglycerol (1,2-diacyl-sn-glycero-3-phospho-(1'-sn-glycerol), PG). Involved in the regulation of the endogenous content of polyunsaturated PI and PS lipids in the nervous system. Changes in these lipids extend to downstream metabolic products like PI phosphates PIP and PIP2, which play fundamental roles in cell biology. Regulates mitochondrial morphology. These dynamic changes may be due to PA hydrolysis at the mitochondrial surface. May play a regulatory role in spermatogenesis or sperm function. The polypeptide is Phospholipase DDHD1 (Homo sapiens (Human)).